The sequence spans 265 residues: Undecaprenyl-diphosphatase (265 aa).

7 consecutive transmembrane segments (helical) span residues 42-62, 82-102, 108-128, 143-163, 181-201, 221-241, and 248-264; these read ATTF…VLYW, GIML…AAHS, LFTP…MLLV, MSPA…WPGF, GLAA…ATGY, GFVV…ALVG, and FAWY…YFMA.

The protein belongs to the UppP family.

Its subcellular location is the cell inner membrane. The catalysed reaction is di-trans,octa-cis-undecaprenyl diphosphate + H2O = di-trans,octa-cis-undecaprenyl phosphate + phosphate + H(+). Catalyzes the dephosphorylation of undecaprenyl diphosphate (UPP). Confers resistance to bacitracin. The protein is Undecaprenyl-diphosphatase of Nitratidesulfovibrio vulgaris (strain ATCC 29579 / DSM 644 / CCUG 34227 / NCIMB 8303 / VKM B-1760 / Hildenborough) (Desulfovibrio vulgaris).